A 36-amino-acid polypeptide reads, in one-letter code: Neuropeptide F (36 aa).

Phenylalanine 36 is subject to Phenylalanine amide.

This sequence belongs to the NPY family. As to expression, central and peripheral nervous system, and muscular pharynx.

The protein localises to the secreted. Its function is as follows. May perform an important neurotransmitter function and may regulate muscular activity. This Arthurdendyus triangulatus (New Zealand flatworm) protein is Neuropeptide F.